Reading from the N-terminus, the 169-residue chain is Peptide deformylase (169 aa).

Residues Cys-91 and His-133 each coordinate Fe cation. Glu-134 is an active-site residue. Fe cation is bound at residue His-137.

Belongs to the polypeptide deformylase family. The cofactor is Fe(2+).

The catalysed reaction is N-terminal N-formyl-L-methionyl-[peptide] + H2O = N-terminal L-methionyl-[peptide] + formate. In terms of biological role, removes the formyl group from the N-terminal Met of newly synthesized proteins. Requires at least a dipeptide for an efficient rate of reaction. N-terminal L-methionine is a prerequisite for activity but the enzyme has broad specificity at other positions. The polypeptide is Peptide deformylase (Pectobacterium atrosepticum (strain SCRI 1043 / ATCC BAA-672) (Erwinia carotovora subsp. atroseptica)).